A 227-amino-acid polypeptide reads, in one-letter code: Ornithine decarboxylase antizyme 1 (227 aa).

This sequence belongs to the ODC antizyme family. Interacts with ODC1 and thereby sterically blocks ODC homodimerization. Forms a ternary complex with PSMB4 and OAZ1 before PSMB4 is incorporated into the 20S proteasome. Interacts with AZIN2; this interaction disrupts the interaction between the antizyme and ODC1. Interacts with FAM171A1.

Its function is as follows. Ornithine decarboxylase (ODC) antizyme protein that negatively regulates ODC activity and intracellular polyamine biosynthesis and uptake in response to increased intracellular polyamine levels. Binds to ODC monomers, inhibiting the assembly of the functional ODC homodimer, and targets the monomers for ubiquitin-independent proteolytic destruction by the 26S proteasome. Triggers ODC degradation by inducing the exposure of a cryptic proteasome-interacting surface of ODC. Stabilizes AZIN2 by interfering with its ubiquitination. Also inhibits cellular uptake of polyamines by inactivating the polyamine uptake transporter. SMAD1/OAZ1/PSMB4 complex mediates the degradation of the CREBBP/EP300 repressor SNIP1. Involved in the translocation of AZIN2 from ER-Golgi intermediate compartment (ERGIC) to the cytosol. This Mus musculus (Mouse) protein is Ornithine decarboxylase antizyme 1 (Oaz1).